Reading from the N-terminus, the 348-residue chain is Fructose-1,6-bisphosphatase class 1 (348 aa).

Residues E92, D111, L113, and D114 each contribute to the Mg(2+) site. Substrate-binding positions include 114-117 (DGSS) and N204. E276 serves as a coordination point for Mg(2+).

This sequence belongs to the FBPase class 1 family. As to quaternary structure, homotetramer. Mg(2+) is required as a cofactor.

It is found in the cytoplasm. It catalyses the reaction beta-D-fructose 1,6-bisphosphate + H2O = beta-D-fructose 6-phosphate + phosphate. The protein operates within carbohydrate biosynthesis; gluconeogenesis. This Methylorubrum extorquens (strain CM4 / NCIMB 13688) (Methylobacterium extorquens) protein is Fructose-1,6-bisphosphatase class 1.